A 169-amino-acid polypeptide reads, in one-letter code: Succinate dehydrogenase cytochrome b560 subunit, mitochondrial (169 aa).

The N-terminal 29 residues, 1-29, are a transit peptide targeting the mitochondrion; it reads MAALLLRHVGRHCLRAHLSPQLCIRNAVP. The Mitochondrial matrix portion of the chain corresponds to 30 to 62; the sequence is LGTTAKEEMERFWSKNTTLNRPLSPHISIYGWS. A helical membrane pass occupies residues 63-92; the sequence is LPMAMSICHRGTGIALSAGVSLFGLSALLV. Residues 93 to 112 are Mitochondrial intermembrane-facing; it reads PGSFESHLEFVKSLCLGPAL. The helical transmembrane segment at 113 to 137 threads the bilayer; it reads IHTAKFALVFPLMYHTWNGIRHLMW. Residue His-127 participates in heme b binding. Residues 138–144 lie on the Mitochondrial matrix side of the membrane; it reads DLGKGLT. The helical transmembrane segment at 145–166 threads the bilayer; the sequence is ISQLHQSGVAVLVLTVLSSVGL. Residues 167-169 are Mitochondrial intermembrane-facing; sequence AAM.

Belongs to the cytochrome b560 family. As to quaternary structure, component of complex II composed of four subunits: the flavoprotein (FP) SDHA, iron-sulfur protein (IP) SDHB, and a cytochrome b560 composed of SDHC and SDHD. It depends on heme b as a cofactor. The N-terminus is blocked.

It is found in the mitochondrion inner membrane. Its pathway is carbohydrate metabolism; tricarboxylic acid cycle. Membrane-anchoring subunit of succinate dehydrogenase (SDH) that is involved in complex II of the mitochondrial electron transport chain and is responsible for transferring electrons from succinate to ubiquinone (coenzyme Q). SDH also oxidizes malate to the non-canonical enol form of oxaloacetate, enol-oxaloacetate. Enol-oxaloacetate, which is a potent inhibitor of the succinate dehydrogenase activity, is further isomerized into keto-oxaloacetate. This chain is Succinate dehydrogenase cytochrome b560 subunit, mitochondrial (SDHC), found in Bos taurus (Bovine).